Here is a 142-residue protein sequence, read N- to C-terminus: Large ribosomal subunit protein uL11 (142 aa).

It belongs to the universal ribosomal protein uL11 family. As to quaternary structure, part of the ribosomal stalk of the 50S ribosomal subunit. Interacts with L10 and the large rRNA to form the base of the stalk. L10 forms an elongated spine to which L12 dimers bind in a sequential fashion forming a multimeric L10(L12)X complex. One or more lysine residues are methylated.

In terms of biological role, forms part of the ribosomal stalk which helps the ribosome interact with GTP-bound translation factors. This is Large ribosomal subunit protein uL11 from Shewanella baltica (strain OS223).